Reading from the N-terminus, the 564-residue chain is Phenylalanine--tRNA ligase beta subunit (564 aa).

The B5 domain occupies 286-362 (YFQNMLEVNV…IGMGLDSFKP (77 aa)). The Mg(2+) site is built by aspartate 340, aspartate 346, glutamate 349, and glutamate 350.

This sequence belongs to the phenylalanyl-tRNA synthetase beta subunit family. Type 2 subfamily. As to quaternary structure, tetramer of two alpha and two beta subunits. The cofactor is Mg(2+).

Its subcellular location is the cytoplasm. The enzyme catalyses tRNA(Phe) + L-phenylalanine + ATP = L-phenylalanyl-tRNA(Phe) + AMP + diphosphate + H(+). The chain is Phenylalanine--tRNA ligase beta subunit from Borrelia turicatae (strain 91E135).